The primary structure comprises 310 residues: N-acetylmuramic acid 6-phosphate etherase (310 aa).

Positions 64–227 (ITARLKSKGR…STSVMIKLGK (164 aa)) constitute an SIS domain. Glutamate 92 serves as the catalytic Proton donor. The active site involves glutamate 123.

Belongs to the GCKR-like family. MurNAc-6-P etherase subfamily. In terms of assembly, homodimer.

It carries out the reaction N-acetyl-D-muramate 6-phosphate + H2O = N-acetyl-D-glucosamine 6-phosphate + (R)-lactate. It participates in amino-sugar metabolism; N-acetylmuramate degradation. Functionally, specifically catalyzes the cleavage of the D-lactyl ether substituent of MurNAc 6-phosphate, producing GlcNAc 6-phosphate and D-lactate. The chain is N-acetylmuramic acid 6-phosphate etherase from Prochlorococcus marinus (strain NATL1A).